The chain runs to 179 residues: Large ribosomal subunit protein uL6 (179 aa).

This sequence belongs to the universal ribosomal protein uL6 family. In terms of assembly, part of the 50S ribosomal subunit.

This protein binds to the 23S rRNA, and is important in its secondary structure. It is located near the subunit interface in the base of the L7/L12 stalk, and near the tRNA binding site of the peptidyltransferase center. This chain is Large ribosomal subunit protein uL6, found in Chlorobium phaeobacteroides (strain BS1).